A 285-amino-acid chain; its full sequence is G patch domain-containing protein 11 (285 aa).

Residues 51–87 adopt a coiled-coil conformation; sequence MLRQIREARRKEEKQQEANLKNRQKSLKEEEQERRDI. Residues 59 to 84 are disordered; the sequence is RRKEEKQQEANLKNRQKSLKEEEQER. The G-patch domain occupies 95 to 141; sequence CENKGFALLQKMGYKSGQALGKSGGGIVEPIPLNIKTGKSGIGHEAS. S141 carries the post-translational modification Phosphoserine. Residue K149 is modified to N6-acetyllysine. Residues 218–235 are compositionally biased toward acidic residues; that stretch reads EETEEDEEEKEQDEDEYK. The tract at residues 218-237 is disordered; the sequence is EETEEDEEEKEQDEDEYKSE.

This sequence belongs to the GPATCH11 family.

The protein resides in the chromosome. The protein localises to the centromere. It localises to the kinetochore. This is G patch domain-containing protein 11 (GPATCH11) from Homo sapiens (Human).